The primary structure comprises 289 residues: Glycine--tRNA ligase alpha subunit (289 aa).

Belongs to the class-II aminoacyl-tRNA synthetase family. As to quaternary structure, tetramer of two alpha and two beta subunits.

The protein resides in the cytoplasm. It catalyses the reaction tRNA(Gly) + glycine + ATP = glycyl-tRNA(Gly) + AMP + diphosphate. The sequence is that of Glycine--tRNA ligase alpha subunit from Nitratidesulfovibrio vulgaris (strain ATCC 29579 / DSM 644 / CCUG 34227 / NCIMB 8303 / VKM B-1760 / Hildenborough) (Desulfovibrio vulgaris).